We begin with the raw amino-acid sequence, 502 residues long: Lysine--tRNA ligase (502 aa).

Residues glutamate 411 and glutamate 418 each contribute to the Mg(2+) site.

This sequence belongs to the class-II aminoacyl-tRNA synthetase family. As to quaternary structure, homodimer. Mg(2+) is required as a cofactor.

It is found in the cytoplasm. It carries out the reaction tRNA(Lys) + L-lysine + ATP = L-lysyl-tRNA(Lys) + AMP + diphosphate. In Clostridium tetani (strain Massachusetts / E88), this protein is Lysine--tRNA ligase.